A 171-amino-acid chain; its full sequence is Crossover junction endodeoxyribonuclease RuvC (171 aa).

Active-site residues include D7, E67, and D139. The Mg(2+) site is built by D7, E67, and D139.

Belongs to the RuvC family. Homodimer which binds Holliday junction (HJ) DNA. The HJ becomes 2-fold symmetrical on binding to RuvC with unstacked arms; it has a different conformation from HJ DNA in complex with RuvA. In the full resolvosome a probable DNA-RuvA(4)-RuvB(12)-RuvC(2) complex forms which resolves the HJ. Requires Mg(2+) as cofactor.

The protein resides in the cytoplasm. The catalysed reaction is Endonucleolytic cleavage at a junction such as a reciprocal single-stranded crossover between two homologous DNA duplexes (Holliday junction).. Functionally, the RuvA-RuvB-RuvC complex processes Holliday junction (HJ) DNA during genetic recombination and DNA repair. Endonuclease that resolves HJ intermediates. Cleaves cruciform DNA by making single-stranded nicks across the HJ at symmetrical positions within the homologous arms, yielding a 5'-phosphate and a 3'-hydroxyl group; requires a central core of homology in the junction. The consensus cleavage sequence is 5'-(A/T)TT(C/G)-3'. Cleavage occurs on the 3'-side of the TT dinucleotide at the point of strand exchange. HJ branch migration catalyzed by RuvA-RuvB allows RuvC to scan DNA until it finds its consensus sequence, where it cleaves and resolves the cruciform DNA. The sequence is that of Crossover junction endodeoxyribonuclease RuvC from Geotalea uraniireducens (strain Rf4) (Geobacter uraniireducens).